A 761-amino-acid polypeptide reads, in one-letter code: Phosphoribosylformylglycinamidine synthase subunit PurL (761 aa).

His58 is an active-site residue. The ATP site is built by Tyr61 and Lys105. Position 107 (Glu107) interacts with Mg(2+). Substrate contacts are provided by residues 108 to 111 and Arg130; that span reads SHNH. The active-site Proton acceptor is the His109. Residue Asp131 participates in Mg(2+) binding. Position 259 (Gln259) interacts with substrate. Asp287 contributes to the Mg(2+) binding site. Position 331–333 (331–333) interacts with substrate; it reads ESQ. Residues Asn519 and Gly556 each contribute to the ATP site. Residue Asn557 participates in Mg(2+) binding. Residue Ser559 coordinates substrate.

Belongs to the FGAMS family. In terms of assembly, monomer. Part of the FGAM synthase complex composed of 1 PurL, 1 PurQ and 2 PurS subunits.

The protein resides in the cytoplasm. It carries out the reaction N(2)-formyl-N(1)-(5-phospho-beta-D-ribosyl)glycinamide + L-glutamine + ATP + H2O = 2-formamido-N(1)-(5-O-phospho-beta-D-ribosyl)acetamidine + L-glutamate + ADP + phosphate + H(+). Its pathway is purine metabolism; IMP biosynthesis via de novo pathway; 5-amino-1-(5-phospho-D-ribosyl)imidazole from N(2)-formyl-N(1)-(5-phospho-D-ribosyl)glycinamide: step 1/2. In terms of biological role, part of the phosphoribosylformylglycinamidine synthase complex involved in the purines biosynthetic pathway. Catalyzes the ATP-dependent conversion of formylglycinamide ribonucleotide (FGAR) and glutamine to yield formylglycinamidine ribonucleotide (FGAM) and glutamate. The FGAM synthase complex is composed of three subunits. PurQ produces an ammonia molecule by converting glutamine to glutamate. PurL transfers the ammonia molecule to FGAR to form FGAM in an ATP-dependent manner. PurS interacts with PurQ and PurL and is thought to assist in the transfer of the ammonia molecule from PurQ to PurL. In Rhodococcus jostii (strain RHA1), this protein is Phosphoribosylformylglycinamidine synthase subunit PurL.